A 224-amino-acid polypeptide reads, in one-letter code: Iron-sulfur cluster repair protein ScdA (224 aa).

It belongs to the RIC family. ScdA subfamily. Homodimer.

It is found in the cytoplasm. Its function is as follows. Di-iron-containing protein involved in the repair of iron-sulfur clusters damaged by oxidative and nitrosative stress conditions. This chain is Iron-sulfur cluster repair protein ScdA, found in Staphylococcus epidermidis (strain ATCC 35984 / DSM 28319 / BCRC 17069 / CCUG 31568 / BM 3577 / RP62A).